A 686-amino-acid polypeptide reads, in one-letter code: Methionine--tRNA ligase (686 aa).

The short motif at 15–25 is the 'HIGH' region element; it reads PYANGPIHLGH. Positions 146, 149, 159, and 162 each coordinate Zn(2+). The short motif at 332-336 is the 'KMSKS' region element; sequence KMSKS. Residue K335 participates in ATP binding. The 102-residue stretch at 585-686 folds into the tRNA-binding domain; the sequence is TFAKTDLRVA…DGAKPGQRIM (102 aa).

It belongs to the class-I aminoacyl-tRNA synthetase family. MetG type 1 subfamily. Homodimer. It depends on Zn(2+) as a cofactor.

Its subcellular location is the cytoplasm. The enzyme catalyses tRNA(Met) + L-methionine + ATP = L-methionyl-tRNA(Met) + AMP + diphosphate. In terms of biological role, is required not only for elongation of protein synthesis but also for the initiation of all mRNA translation through initiator tRNA(fMet) aminoacylation. The sequence is that of Methionine--tRNA ligase from Psychromonas ingrahamii (strain DSM 17664 / CCUG 51855 / 37).